Consider the following 449-residue polypeptide: Cyclin-B1-1 (449 aa).

Disordered stretches follow at residues 1 to 34 (MATR…VAGR) and 90 to 143 (AVAP…SVRK). 2 stretches are compositionally biased toward low complexity: residues 90–102 (AVAP…PAQR) and 121–134 (EISS…RQQS).

Belongs to the cyclin family. Cyclin AB subfamily.

This chain is Cyclin-B1-1 (CYCB1-1), found in Oryza sativa subsp. japonica (Rice).